The chain runs to 357 residues: Glycerol-3-phosphate dehydrogenase [NAD(P)+] (357 aa).

Residues Ser-12, Trp-13, His-33, and Lys-115 each coordinate NADPH. The sn-glycerol 3-phosphate site is built by Lys-115, Gly-149, and Ser-151. Position 153 (Gly-153) interacts with NADPH. Residues Lys-204, Asp-263, Arg-274, and Asn-275 each contribute to the sn-glycerol 3-phosphate site. Lys-204 serves as the catalytic Proton acceptor. Arg-274 is an NADPH binding site. The NADPH site is built by Leu-307 and Glu-309.

Belongs to the NAD-dependent glycerol-3-phosphate dehydrogenase family.

It localises to the cytoplasm. It carries out the reaction sn-glycerol 3-phosphate + NAD(+) = dihydroxyacetone phosphate + NADH + H(+). The enzyme catalyses sn-glycerol 3-phosphate + NADP(+) = dihydroxyacetone phosphate + NADPH + H(+). It participates in membrane lipid metabolism; glycerophospholipid metabolism. Catalyzes the reduction of the glycolytic intermediate dihydroxyacetone phosphate (DHAP) to sn-glycerol 3-phosphate (G3P), the key precursor for phospholipid synthesis. The polypeptide is Glycerol-3-phosphate dehydrogenase [NAD(P)+] (Treponema denticola (strain ATCC 35405 / DSM 14222 / CIP 103919 / JCM 8153 / KCTC 15104)).